The sequence spans 20 residues: YAELKAILAKQIPEKQAXIN.

The protein is Unknown protein NF003 from 2D-PAGE of Naegleria fowleri (Brain eating amoeba).